Reading from the N-terminus, the 94-residue chain is Evasin P1104 (94 aa).

An N-terminal signal peptide occupies residues 1-28; it reads MASNLFTIFQLAGFVAIVFIVNLHSVSA. Intrachain disulfides connect cysteine 48–cysteine 66, cysteine 52–cysteine 68, and cysteine 62–cysteine 79. N-linked (GlcNAc...) asparagine glycosylation is present at asparagine 51.

Its subcellular location is the secreted. Its function is as follows. Salivary chemokine-binding protein which binds to host chemokines CXCL1, CXCL2, CXCL3, CXCL5, CXCL6, CXCL12 and CXCL13. The sequence is that of Evasin P1104 from Ixodes ricinus (Common tick).